The primary structure comprises 453 residues: Tol-Pal system protein TolB (453 aa).

The first 31 residues, 1–31 (MINNLSISMTKVIKIILAIIIILFNTLSIFA), serve as a signal peptide directing secretion.

Belongs to the TolB family. The Tol-Pal system is composed of five core proteins: the inner membrane proteins TolA, TolQ and TolR, the periplasmic protein TolB and the outer membrane protein Pal. They form a network linking the inner and outer membranes and the peptidoglycan layer.

The protein resides in the periplasm. In terms of biological role, part of the Tol-Pal system, which plays a role in outer membrane invagination during cell division and is important for maintaining outer membrane integrity. In Orientia tsutsugamushi (strain Ikeda) (Rickettsia tsutsugamushi), this protein is Tol-Pal system protein TolB.